Reading from the N-terminus, the 305-residue chain is MSFTSDVKKELTRNLATTGALLALVRMNGSVGIFNGLTLSITTENAGTAKYIYQMLQELYEIHAEIRVHQKTTLSKNRVYTVFITEGAGELLDELSLADSLMLDNGVPEFVKNDEFIKKDYLRGAFLSAGALHNPEKGEYQLSIANVYQEHAEDLQEIFRDFGLNARVIERKNRWILYLSKAEEIMDFLTLIGAMKARLKFEEAKIMREMRGLANRQSNFENANIAKSVMAAQEAIDAIQFLNEKKELEQLPPSLKEIARLRLENPEATIKELGELLDPPLGKSGVNHRLRKLVERSNDLKKVES.

The H-T-H motif DNA-binding region spans 269-302; it reads TIKELGELLDPPLGKSGVNHRLRKLVERSNDLKK.

This sequence belongs to the WhiA family.

Functionally, involved in cell division and chromosome segregation. This Lactococcus lactis subsp. cremoris (strain MG1363) protein is Probable cell division protein WhiA.